The sequence spans 268 residues: Putative hydro-lyase A1S_1268 (268 aa).

Belongs to the D-glutamate cyclase family.

This Acinetobacter baumannii (strain ATCC 17978 / DSM 105126 / CIP 53.77 / LMG 1025 / NCDC KC755 / 5377) protein is Putative hydro-lyase A1S_1268.